The following is a 124-amino-acid chain: Small ribosomal subunit protein uS12 (124 aa).

Positions 1–42 (MPTIQQLVRKGRRPKVNKTKSPALRGNPQQRGVCSRVYTTTP) are disordered. Residues 9-18 (RKGRRPKVNK) are compositionally biased toward basic residues. Positions 27–42 (NPQQRGVCSRVYTTTP) are enriched in polar residues. Asp89 carries the post-translational modification 3-methylthioaspartic acid.

It belongs to the universal ribosomal protein uS12 family. In terms of assembly, part of the 30S ribosomal subunit. Contacts proteins S8 and S17. May interact with IF1 in the 30S initiation complex.

With S4 and S5 plays an important role in translational accuracy. Its function is as follows. Interacts with and stabilizes bases of the 16S rRNA that are involved in tRNA selection in the A site and with the mRNA backbone. Located at the interface of the 30S and 50S subunits, it traverses the body of the 30S subunit contacting proteins on the other side and probably holding the rRNA structure together. The combined cluster of proteins S8, S12 and S17 appears to hold together the shoulder and platform of the 30S subunit. This is Small ribosomal subunit protein uS12 from Tropheryma whipplei (strain TW08/27) (Whipple's bacillus).